We begin with the raw amino-acid sequence, 1402 residues long: Nuclear pore complex protein Nup160 (1402 aa).

4 positions are modified to phosphoserine: Ser10, Ser456, Ser915, and Ser1123.

In terms of assembly, part of the nuclear pore complex (NPC). Forms part of the NUP160 subcomplex in the nuclear pore which is composed of NUP160, NUP133, NUP107 and NUP96. This complex plays a role in RNA export and in tethering NUP98 and NUP153 to the nucleus.

The protein resides in the nucleus. Its subcellular location is the nuclear pore complex. Its function is as follows. Functions as a component of the nuclear pore complex (NPC). Involved in poly(A)+ RNA transport. The polypeptide is Nuclear pore complex protein Nup160 (Nup160) (Mus musculus (Mouse)).